The sequence spans 425 residues: Kynureninase (425 aa).

Pyridoxal 5'-phosphate is bound by residues Leu105, Thr106, 133-136 (FPSD), Asp218, His221, and Tyr243. Lys244 carries the post-translational modification N6-(pyridoxal phosphate)lysine. Residues Trp274 and Asn302 each contribute to the pyridoxal 5'-phosphate site.

It belongs to the kynureninase family. In terms of assembly, homodimer. Requires pyridoxal 5'-phosphate as cofactor.

The catalysed reaction is L-kynurenine + H2O = anthranilate + L-alanine + H(+). The enzyme catalyses 3-hydroxy-L-kynurenine + H2O = 3-hydroxyanthranilate + L-alanine + H(+). The protein operates within amino-acid degradation; L-kynurenine degradation; L-alanine and anthranilate from L-kynurenine: step 1/1. It functions in the pathway cofactor biosynthesis; NAD(+) biosynthesis; quinolinate from L-kynurenine: step 2/3. Functionally, catalyzes the cleavage of L-kynurenine (L-Kyn) and L-3-hydroxykynurenine (L-3OHKyn) into anthranilic acid (AA) and 3-hydroxyanthranilic acid (3-OHAA), respectively. This is Kynureninase from Christiangramia forsetii (strain DSM 17595 / CGMCC 1.15422 / KT0803) (Gramella forsetii).